A 105-amino-acid chain; its full sequence is Large ribosomal subunit protein uL24 (105 aa).

Belongs to the universal ribosomal protein uL24 family. Part of the 50S ribosomal subunit.

In terms of biological role, one of two assembly initiator proteins, it binds directly to the 5'-end of the 23S rRNA, where it nucleates assembly of the 50S subunit. One of the proteins that surrounds the polypeptide exit tunnel on the outside of the subunit. This is Large ribosomal subunit protein uL24 from Xylella fastidiosa (strain M12).